The following is a 236-amino-acid chain: Purine nucleoside phosphorylase CA_C1699 (236 aa).

Zn(2+)-binding residues include histidine 62, cysteine 97, and histidine 114.

This sequence belongs to the purine nucleoside phosphorylase YfiH/LACC1 family. Homodimer. Cu(2+) serves as cofactor. Zn(2+) is required as a cofactor.

It catalyses the reaction adenosine + phosphate = alpha-D-ribose 1-phosphate + adenine. The catalysed reaction is S-methyl-5'-thioadenosine + phosphate = 5-(methylsulfanyl)-alpha-D-ribose 1-phosphate + adenine. It carries out the reaction inosine + phosphate = alpha-D-ribose 1-phosphate + hypoxanthine. The enzyme catalyses adenosine + H2O + H(+) = inosine + NH4(+). Purine nucleoside enzyme that catalyzes the phosphorolysis of adenosine and inosine nucleosides, yielding D-ribose 1-phosphate and the respective free bases, adenine and hypoxanthine. Also catalyzes the phosphorolysis of S-methyl-5'-thioadenosine into adenine and S-methyl-5-thio-alpha-D-ribose 1-phosphate. Also has adenosine deaminase activity. This is Purine nucleoside phosphorylase CA_C1699 from Clostridium acetobutylicum (strain ATCC 824 / DSM 792 / JCM 1419 / IAM 19013 / LMG 5710 / NBRC 13948 / NRRL B-527 / VKM B-1787 / 2291 / W).